A 185-amino-acid polypeptide reads, in one-letter code: MKINREIPVRQRNIVLIGFMGVGKTTIGQLVAKKLYRDFIDVDQEIEKKYNMTIPEMFQQKGEAFFRQAEKDYIVDLCEHTQLKIVSLGGGAFKQEEIKRACLKHCTVLFLDLSWENWKQRLDILIENRPVLHNRTLDEMKELFEERREIYSLHNSRVETDHLEAEEVANYIVDTLKLGWDLYSK.

Residue 21-26 (GVGKTT) coordinates ATP. Residue threonine 25 participates in Mg(2+) binding. Substrate-binding residues include aspartate 43, arginine 67, and glycine 90. Residue arginine 129 coordinates ATP. Arginine 147 lines the substrate pocket.

Belongs to the shikimate kinase family. Monomer. Mg(2+) is required as a cofactor.

The protein localises to the cytoplasm. The enzyme catalyses shikimate + ATP = 3-phosphoshikimate + ADP + H(+). The protein operates within metabolic intermediate biosynthesis; chorismate biosynthesis; chorismate from D-erythrose 4-phosphate and phosphoenolpyruvate: step 5/7. In terms of biological role, catalyzes the specific phosphorylation of the 3-hydroxyl group of shikimic acid using ATP as a cosubstrate. The protein is Shikimate kinase of Bacillus pumilus (strain SAFR-032).